A 649-amino-acid polypeptide reads, in one-letter code: Threonine--tRNA ligase (649 aa).

In terms of domain architecture, TGS spans 1-66; that stretch reads MVQITLPDGS…DNDAQLAIVT (66 aa). The tract at residues 247-538 is catalytic; it reads DHRKIGRELD…LIENHAGAMP (292 aa). Residues Cys-338, His-389, and His-515 each contribute to the Zn(2+) site.

This sequence belongs to the class-II aminoacyl-tRNA synthetase family. Homodimer. Zn(2+) serves as cofactor.

The protein resides in the cytoplasm. It catalyses the reaction tRNA(Thr) + L-threonine + ATP = L-threonyl-tRNA(Thr) + AMP + diphosphate + H(+). Catalyzes the attachment of threonine to tRNA(Thr) in a two-step reaction: L-threonine is first activated by ATP to form Thr-AMP and then transferred to the acceptor end of tRNA(Thr). Also edits incorrectly charged L-seryl-tRNA(Thr). The chain is Threonine--tRNA ligase from Bordetella bronchiseptica (strain ATCC BAA-588 / NCTC 13252 / RB50) (Alcaligenes bronchisepticus).